A 155-amino-acid chain; its full sequence is Nascent polypeptide-associated complex subunit beta (155 aa).

Disordered regions lie at residues 1-35 (MDQA…SGAD) and 116-155 (LAES…SNVE). Positions 20–30 (TPRRKVKKVHK) are enriched in basic residues. The NAC-A/B domain occupies 33 to 98 (GADDKKLQAT…GEEKELTELV (66 aa)). Residues 136–155 (DEEDDIPDLVEGENFESNVE) show a composition bias toward acidic residues.

This sequence belongs to the NAC-beta family. Part of the nascent polypeptide-associated complex (NAC), consisting of egd2 and egd1. NAC associates with ribosomes via egd1.

It is found in the cytoplasm. The protein resides in the nucleus. Its function is as follows. Component of the nascent polypeptide-associated complex (NAC), a dynamic component of the ribosomal exit tunnel, protecting the emerging polypeptides from interaction with other cytoplasmic proteins to ensure appropriate nascent protein targeting. The NAC complex also promotes mitochondrial protein import by enhancing productive ribosome interactions with the outer mitochondrial membrane and blocks the inappropriate interaction of ribosomes translating non-secretory nascent polypeptides with translocation sites in the membrane of the endoplasmic reticulum. EGD1 may act as a transcription factor that exert a negative effect on the expression of several genes that are transcribed by RNA polymerase II. This is Nascent polypeptide-associated complex subunit beta (egd1) from Aspergillus niger (strain ATCC MYA-4892 / CBS 513.88 / FGSC A1513).